The primary structure comprises 484 residues: Glutamate mutase epsilon subunit (484 aa).

R66 serves as a coordination point for L-glutamate. G68 is a binding site for adenosylcob(III)alamin. R100 is a binding site for L-glutamate. Residue N123 coordinates adenosylcob(III)alamin. Residues 149–150 (RH), E171, and Y177 each bind L-glutamate. Residue P180 coordinates adenosylcob(III)alamin. Residue Y181 coordinates L-glutamate. F297, K326, E330, and I334 together coordinate adenosylcob(III)alamin.

It belongs to the methylaspartate mutase GlmE subunit family. In terms of assembly, heterotetramer composed of 2 epsilon subunits (GlmE) and 2 sigma subunits (GlmS). GlmE exists as a homodimer and GlmS as a monomer. Requires adenosylcob(III)alamin as cofactor.

The enzyme catalyses (2S,3S)-3-methyl-L-aspartate = L-glutamate. The protein operates within amino-acid degradation; L-glutamate degradation via mesaconate pathway; acetate and pyruvate from L-glutamate: step 1/4. In terms of biological role, catalyzes the carbon skeleton rearrangement of L-glutamate to L-threo-3-methylaspartate ((2S,3S)-3-methylaspartate). The protein is Glutamate mutase epsilon subunit of Desulfitobacterium hafniense (strain Y51).